The primary structure comprises 216 residues: Uracil-DNA glycosylase (216 aa).

Residue Asp-59 is the Proton acceptor of the active site.

This sequence belongs to the uracil-DNA glycosylase (UDG) superfamily. UNG family.

The protein resides in the cytoplasm. It catalyses the reaction Hydrolyzes single-stranded DNA or mismatched double-stranded DNA and polynucleotides, releasing free uracil.. Functionally, excises uracil residues from the DNA which can arise as a result of misincorporation of dUMP residues by DNA polymerase or due to deamination of cytosine. In Staphylococcus epidermidis (strain ATCC 35984 / DSM 28319 / BCRC 17069 / CCUG 31568 / BM 3577 / RP62A), this protein is Uracil-DNA glycosylase.